Reading from the N-terminus, the 524-residue chain is Probable aminopeptidase NPEPL1 (524 aa).

Zn(2+)-binding residues include Lys-260 and Asp-265. The active site involves Lys-272. Positions 283, 342, and 344 each coordinate Zn(2+). The active site involves Arg-346.

It belongs to the peptidase M17 family. Zn(2+) is required as a cofactor. Mn(2+) serves as cofactor.

Functionally, probably catalyzes the removal of unsubstituted N-terminal amino acids from various peptides. This is Probable aminopeptidase NPEPL1 (Npepl1) from Mus musculus (Mouse).